Here is a 342-residue protein sequence, read N- to C-terminus: Arrestin domain-containing protein 5 (342 aa).

This sequence belongs to the arrestin family. In terms of tissue distribution, testis-enriched.

Its subcellular location is the membrane. Its function is as follows. Plays an essential role in spermatogenesis. May be involved in the anchoring of the sperm head to the tail during spermatogenesis by affecting SEC22A-mediated SUN5 and NDC1 transport and localization. This Homo sapiens (Human) protein is Arrestin domain-containing protein 5 (ARRDC5).